Here is a 713-residue protein sequence, read N- to C-terminus: Transcription activator of gluconeogenesis CPC735_053490 (713 aa).

The interval 1-70 (MTANAINGPV…NAKDPLRPRR (70 aa)) is disordered. Residues 19–56 (GDNNKSADTTMADQGTRPESQPQGQNNGAKPQNGQTKP) show a composition bias toward polar residues. The segment at residues 77–105 (CFACQRAHLTCGDERPCQRCIKRGIQNAC) is a DNA-binding region (zn(2)-C6 fungal-type). The segment covering 145 to 159 (PLTRNGSNSKTNFYP) has biased composition (polar residues). 4 disordered regions span residues 145–229 (PLTR…ASGQ), 274–318 (GAGE…LFGD), 541–564 (GGSS…GMDI), and 623–665 (GTTS…QRKW). Over residues 160–171 (QQQSSFNNFYQN) the composition is skewed to low complexity. Residues 191 to 212 (FPSQSPVSPTFNMTANPAASGN) show a composition bias toward polar residues. Residues 213–229 (QGLPSSLSASNSNASGQ) show a composition bias toward low complexity. Polar residues-rich tracts occupy residues 295-312 (SGTY…TGQP), 541-558 (GGSS…SFTP), and 649-659 (GASNGQSQHSL).

Belongs to the ERT1/acuK family.

It localises to the nucleus. Its function is as follows. Transcription factor which regulates nonfermentable carbon utilization. Activator of gluconeogenetic genes. The protein is Transcription activator of gluconeogenesis CPC735_053490 of Coccidioides posadasii (strain C735) (Valley fever fungus).